The chain runs to 905 residues: FIGNL1-interacting regulator of recombination and mitosis (905 aa).

Phosphoserine occurs at positions 101 and 796. Position 845 is an N6-acetyllysine (Lys-845).

As to quaternary structure, interacts (via its N-terminal region) with PLK1; controls PLK1 kinase activity. Interacts (via the KVVXF motif) with PPP1CC; controls PLK1 kinase activity. Interacts with FIGNL1; may regulate homologous recombination. In terms of processing, phosphorylation at Ser-101 by PLK1 strengthens FIRRM-PLK1 interaction. Phosphorylation at Ser-796 by PLK1 negatively regulates its interaction with PPP1CC.

The protein resides in the chromosome. It is found in the centromere. It localises to the kinetochore. The protein localises to the nucleus. Its subcellular location is the midbody. The protein resides in the cytoplasm. It is found in the cytoskeleton. It localises to the spindle. Its function is as follows. Regulates PLK1 kinase activity at kinetochores and promotes faithful chromosome segregation in prometaphase by bridging kinase and phosphatase activities. Phosphorylation of FIRRM by PLK1 negatively regulates its interaction with the phosphatase, PPP1CC, thus creating a negative feedback loop for maintaining proper PLK1 kinase activity during mitosis. In complex with FIGL1 may regulate homologous recombination. This Rattus norvegicus (Rat) protein is FIGNL1-interacting regulator of recombination and mitosis.